We begin with the raw amino-acid sequence, 98 residues long: Gas vesicle protein J2 (98 aa).

A disordered region spans residues 75–98 (AGVDADDSKSVLERPDPPTTEGSE). Residues 80–90 (DDSKSVLERPD) show a composition bias toward basic and acidic residues.

It belongs to the gas vesicle GvpA family. In terms of assembly, gvpF to GvpM interact with each other in vitro, and may form multi-subunit complex(es). Interacts with GvpA.

Its subcellular location is the gas vesicle. Functionally, a minor component of the gas vesicle. Proteins GvpF to GvpM might be involved in nucleating gas vesicle formation. Gas vesicles are hollow, gas filled proteinaceous nanostructures found in several microbial planktonic microorganisms. They allow positioning of halobacteria at the optimal depth for growth in the poorly aerated, shallow brine pools of their habitat. Expression of 2 c-vac DNA fragments containing 2 divergently transcribed regions (gvpE-gvpF-gvpG-gvpH-gvpI-gvpJ-gvpK-gvpL-gvpM and gvpA-gvpC-gvpN-gvpO) allows H.volcanii to produce gas vesicles. This Halobacterium salinarum (strain ATCC 700922 / JCM 11081 / NRC-1) (Halobacterium halobium) protein is Gas vesicle protein J2.